The chain runs to 335 residues: uncharacterized protein (335 aa).

The protein belongs to the glycosyltransferase group 1 family. Glycosyltransferase 4 subfamily.

This is an uncharacterized protein from Sulfolobus islandicus rod-shaped virus 1 (SIRV-1).